The following is a 257-amino-acid chain: 5-oxoprolinase subunit A (257 aa).

Belongs to the LamB/PxpA family. Forms a complex composed of PxpA, PxpB and PxpC.

It carries out the reaction 5-oxo-L-proline + ATP + 2 H2O = L-glutamate + ADP + phosphate + H(+). Functionally, catalyzes the cleavage of 5-oxoproline to form L-glutamate coupled to the hydrolysis of ATP to ADP and inorganic phosphate. This Bacillus subtilis (strain 168) protein is 5-oxoprolinase subunit A.